We begin with the raw amino-acid sequence, 644 residues long: Putative aldehyde dehydrogenase-like protein YHR039C (644 aa).

The N-linked (GlcNAc...) asparagine glycan is linked to asparagine 15. Glutamate 354 functions as the Proton acceptor in the catalytic mechanism. The active-site Nucleophile is the cysteine 389. N-linked (GlcNAc...) asparagine glycans are attached at residues asparagine 565 and asparagine 627.

It belongs to the aldehyde dehydrogenase family. Post-translationally, N-glycosylated.

The protein resides in the endoplasmic reticulum. In Saccharomyces cerevisiae (strain ATCC 204508 / S288c) (Baker's yeast), this protein is Putative aldehyde dehydrogenase-like protein YHR039C (MSC7).